A 379-amino-acid chain; its full sequence is Chaperone protein DnaJ (379 aa).

Residues 5–70 enclose the J domain; sequence DYYEVLGVQK…QKRAAYDRFG (66 aa). Residues 137–215 form a CR-type zinc finger; the sequence is GATTTVRVPT…CGGQGRVRKE (79 aa). Zn(2+)-binding residues include Cys-150, Cys-153, Cys-167, Cys-170, Cys-189, Cys-192, Cys-203, and Cys-206. CXXCXGXG motif repeat units follow at residues 150 to 157, 167 to 174, 189 to 196, and 203 to 210; these read CESCNGTG, CPTCNGHG, CPACHGVG, and CRTCGGQG.

This sequence belongs to the DnaJ family. Homodimer. Zn(2+) is required as a cofactor.

The protein localises to the cytoplasm. In terms of biological role, participates actively in the response to hyperosmotic and heat shock by preventing the aggregation of stress-denatured proteins and by disaggregating proteins, also in an autonomous, DnaK-independent fashion. Unfolded proteins bind initially to DnaJ; upon interaction with the DnaJ-bound protein, DnaK hydrolyzes its bound ATP, resulting in the formation of a stable complex. GrpE releases ADP from DnaK; ATP binding to DnaK triggers the release of the substrate protein, thus completing the reaction cycle. Several rounds of ATP-dependent interactions between DnaJ, DnaK and GrpE are required for fully efficient folding. Also involved, together with DnaK and GrpE, in the DNA replication of plasmids through activation of initiation proteins. The sequence is that of Chaperone protein DnaJ from Rhodospirillum centenum (strain ATCC 51521 / SW).